Here is a 472-residue protein sequence, read N- to C-terminus: 3-isopropylmalate dehydratase large subunit (472 aa).

[4Fe-4S] cluster contacts are provided by cysteine 352, cysteine 413, and cysteine 416.

Belongs to the aconitase/IPM isomerase family. LeuC type 1 subfamily. Heterodimer of LeuC and LeuD. It depends on [4Fe-4S] cluster as a cofactor.

The catalysed reaction is (2R,3S)-3-isopropylmalate = (2S)-2-isopropylmalate. Its pathway is amino-acid biosynthesis; L-leucine biosynthesis; L-leucine from 3-methyl-2-oxobutanoate: step 2/4. In terms of biological role, catalyzes the isomerization between 2-isopropylmalate and 3-isopropylmalate, via the formation of 2-isopropylmaleate. The sequence is that of 3-isopropylmalate dehydratase large subunit from Laribacter hongkongensis (strain HLHK9).